We begin with the raw amino-acid sequence, 387 residues long: tRNA-specific 2-thiouridylase MnmA (387 aa).

ATP-binding positions include 6–13 (AMSGGVDS) and Leu32. Cys101 functions as the Nucleophile in the catalytic mechanism. An intrachain disulfide couples Cys101 to Cys199. Residue Gly125 participates in ATP binding. The segment at 148 to 150 (KDQ) is interaction with tRNA. Cys199 (cysteine persulfide intermediate) is an active-site residue.

The protein belongs to the MnmA/TRMU family.

It localises to the cytoplasm. The catalysed reaction is S-sulfanyl-L-cysteinyl-[protein] + uridine(34) in tRNA + AH2 + ATP = 2-thiouridine(34) in tRNA + L-cysteinyl-[protein] + A + AMP + diphosphate + H(+). Functionally, catalyzes the 2-thiolation of uridine at the wobble position (U34) of tRNA, leading to the formation of s(2)U34. The protein is tRNA-specific 2-thiouridylase MnmA of Clavibacter michiganensis subsp. michiganensis (strain NCPPB 382).